A 333-amino-acid polypeptide reads, in one-letter code: Casein kinase II subunit alpha-2 (333 aa).

One can recognise a Protein kinase domain in the interval 34 to 319; it reads YEVVRKVGRG…AREAMAHPYF (286 aa). Residues 40 to 48 and K63 contribute to the ATP site; that span reads VGRGKYSEV. D151 acts as the Proton acceptor in catalysis.

The protein belongs to the protein kinase superfamily. Ser/Thr protein kinase family. CK2 subfamily. Monomer. Autophosphorylated.

The protein resides in the cytoplasm. The enzyme catalyses L-seryl-[protein] + ATP = O-phospho-L-seryl-[protein] + ADP + H(+). It catalyses the reaction L-threonyl-[protein] + ATP = O-phospho-L-threonyl-[protein] + ADP + H(+). Its function is as follows. Casein kinases are operationally defined by their preferential utilization of acidic proteins such as caseins as substrates. It can phosphorylate a large number of proteins. Involved in photoperiod sensitivity (PS). Increases days-to-heading under natural day (ND) and long day (LD) conditions, but not under short day (SD) conditions. The protein is Casein kinase II subunit alpha-2 of Oryza sativa subsp. indica (Rice).